Reading from the N-terminus, the 147-residue chain is Transcriptional repressor NrdR (147 aa).

Residues 3–34 (CPFCGHLETQVVETRVSEDADFVRRRRQCSAC) fold into a zinc finger. The region spanning 49 to 139 (PVVVKKDGSR…VYRSFEDVDE (91 aa)) is the ATP-cone domain.

This sequence belongs to the NrdR family. It depends on Zn(2+) as a cofactor.

Its function is as follows. Negatively regulates transcription of bacterial ribonucleotide reductase nrd genes and operons by binding to NrdR-boxes. The protein is Transcriptional repressor NrdR of Variovorax paradoxus (strain S110).